Here is a 353-residue protein sequence, read N- to C-terminus: Melanin-concentrating hormone receptor 1 (353 aa).

The interval 1–28 (MDLEASLLPTGPNASNTSDGPDNLTSAG) is disordered. Topologically, residues 1 to 45 (MDLEASLLPTGPNASNTSDGPDNLTSAGPPPRTGSISYVNIIMPS) are extracellular. Over residues 12–26 (PNASNTSDGPDNLTS) the composition is skewed to polar residues. N-linked (GlcNAc...) asparagine glycosylation is found at N13, N16, and N23. Residues 46–66 (VFGTICLLGIIGNSMVIFAVV) traverse the membrane as a helical segment. At 67-79 (KKSKLHWFSNVPD) the chain is on the cytoplasmic side. A helical transmembrane segment spans residues 80–100 (IFIINLSVVDLLFLLGMPFMI). Over 101 to 116 (HQLMGNGVWHFGETMC) the chain is Extracellular. C116 and C194 are joined by a disulfide. The chain crosses the membrane as a helical span at residues 117 to 139 (TLITAMDANSQFTSTYILTAMAI). Over 140 to 161 (DRYLATVHPISSTRFRKPSVAT) the chain is Cytoplasmic. Residues 162–182 (LVICLLWALSIISITPVWLYA) traverse the membrane as a helical segment. The Extracellular portion of the chain corresponds to 183–204 (RLIPFPGGTVGCGIRLPNPDTD). A helical membrane pass occupies residues 205-225 (LYWFTLYQFFLAFALPFVVIT). Residues 226-256 (AAYVRILQRMTSSVAPASQRSIRLRTKRVTR) are Cytoplasmic-facing. A helical transmembrane segment spans residues 257 to 277 (TAIAICLVFFVCWAPYYVLQL). Over 278–294 (TQLSISRPTLTFVYLYN) the chain is Extracellular. Residues 295-315 (AAISLGYANSCLNPFVYIVLC) traverse the membrane as a helical segment. Residues 316-353 (ETFRKRLVLSVKPAAQGQLRAVSNAQTAEEERTESKGT) lie on the Cytoplasmic side of the membrane.

The protein belongs to the G-protein coupled receptor 1 family. Interacts with NCDN.

The protein localises to the cell membrane. In terms of biological role, receptor for melanin-concentrating hormone, coupled to both G proteins that inhibit adenylyl cyclase and G proteins that activate phosphoinositide hydrolysis. This chain is Melanin-concentrating hormone receptor 1, found in Sus scrofa (Pig).